We begin with the raw amino-acid sequence, 147 residues long: MSQSKDLQGGKAFGLLKAQQEERLDGINKHFLDDPKYSSDEDLQSKLEAFKTKYMEFDLNGNGDIDIMSLKRMLEKLGVPKTHLELKKLIREVSSGSEETFSYSDFLRMMLGKRSAILRMILMYEEKNKEHQKPTGPPAKKAISELP.

An N-acetylserine modification is found at serine 2. N6-acetyllysine is present on lysine 11. Position 39 is a phosphoserine (serine 39). An EF-hand 1 domain is found at 45-80; sequence SKLEAFKTKYMEFDLNGNGDIDIMSLKRMLEKLGVP. Ca(2+) contacts are provided by aspartate 58, asparagine 60, asparagine 62, aspartate 64, glutamate 98, threonine 100, and aspartate 105. An EF-hand 2; degenerate domain is found at 81–115; the sequence is KTHLELKKLIREVSSGSEETFSYSDFLRMMLGKRS. Residues 127–147 form a disordered region; that stretch reads KNKEHQKPTGPPAKKAISELP.

As to quaternary structure, homodimer (Potential). Monomer. Interacts with LCP1. In terms of tissue distribution, cardiac allograft, spleen and testis. Expressed by inflammatory cells (macrophages and neutrophils).

It localises to the cytoplasm. The protein localises to the cytoskeleton. The protein resides in the cell projection. It is found in the ruffle membrane. Its subcellular location is the phagocytic cup. Its function is as follows. Actin-binding protein that enhances membrane ruffling and RAC activation. Enhances the actin-bundling activity of LCP1. Binds calcium. Plays a role in RAC signaling and in phagocytosis. May play an role in macrophage activation and function. Promotes the proliferation of vascular smooth muscle cells and of T-lymphocytes. Enhances lymphocyte migration. Plays a role in vascular inflammation. This Rattus norvegicus (Rat) protein is Allograft inflammatory factor 1 (Aif1).